Consider the following 207-residue polypeptide: ATP-dependent Clp protease proteolytic subunit (207 aa).

Catalysis depends on S111, which acts as the Nucleophile. Residue H136 is part of the active site.

It belongs to the peptidase S14 family. In terms of assembly, fourteen ClpP subunits assemble into 2 heptameric rings which stack back to back to give a disk-like structure with a central cavity, resembling the structure of eukaryotic proteasomes.

The protein resides in the cytoplasm. The catalysed reaction is Hydrolysis of proteins to small peptides in the presence of ATP and magnesium. alpha-casein is the usual test substrate. In the absence of ATP, only oligopeptides shorter than five residues are hydrolyzed (such as succinyl-Leu-Tyr-|-NHMec, and Leu-Tyr-Leu-|-Tyr-Trp, in which cleavage of the -Tyr-|-Leu- and -Tyr-|-Trp bonds also occurs).. Functionally, cleaves peptides in various proteins in a process that requires ATP hydrolysis. Has a chymotrypsin-like activity. Plays a major role in the degradation of misfolded proteins. This chain is ATP-dependent Clp protease proteolytic subunit, found in Aliivibrio fischeri (strain ATCC 700601 / ES114) (Vibrio fischeri).